We begin with the raw amino-acid sequence, 869 residues long: DNA mismatch repair protein MutS (869 aa).

618–625 (GPNMGGKS) lines the ATP pocket.

It belongs to the DNA mismatch repair MutS family.

In terms of biological role, this protein is involved in the repair of mismatches in DNA. It is possible that it carries out the mismatch recognition step. This protein has a weak ATPase activity. The sequence is that of DNA mismatch repair protein MutS from Zymomonas mobilis subsp. mobilis (strain ATCC 31821 / ZM4 / CP4).